Reading from the N-terminus, the 110-residue chain is uncharacterized protein (110 aa).

Its subcellular location is the plastid. The protein localises to the chloroplast. This is an uncharacterized protein from Auxenochlorella pyrenoidosa (Freshwater green alga).